Here is a 292-residue protein sequence, read N- to C-terminus: NAD kinase (292 aa).

The Proton acceptor role is filled by Asp73. NAD(+) is bound by residues 73–74, 147–148, His158, Arg175, Asp177, 188–193, and Gln247; these read DG, NE, and TAYSLS.

Belongs to the NAD kinase family. A divalent metal cation is required as a cofactor.

It is found in the cytoplasm. The catalysed reaction is NAD(+) + ATP = ADP + NADP(+) + H(+). Involved in the regulation of the intracellular balance of NAD and NADP, and is a key enzyme in the biosynthesis of NADP. Catalyzes specifically the phosphorylation on 2'-hydroxyl of the adenosine moiety of NAD to yield NADP. The protein is NAD kinase of Edwardsiella ictaluri (strain 93-146).